The following is a 537-amino-acid chain: MAKAATSKKEASKVEAKKPAARLGAKKTVSKSEESVKTSQSVKNSPSRTGSSSPQKGGKKGAVGEIKQVIGAIVDVQFEGALPNILNALETDRLGSRLILEVAQHLGENTVRTIAMDTTDGLVRGQKVFDTGTQICVPVGEATLGRIMNVIGEPVDEVGPIVTTKTRSIHQKAPEYIEQSTESEILVTGIKVVDLLAPYSKGGKVGLFGGAGVGKTVLIMELINNIAKAHGGYSVFAGVGERTREGNDLYYEMIESRVNVNPKENDGSTKGSKCALVYGQMNEPPGARARVALSGLTIAENFRDEGQDVLFFVDNIFRFTQAGSEVSALLGRIPSAVGYQPTLATDMGALQERITSTKTGSITSVQAIYVPADDLTDPAPATSFAHLDATTVLSRSIAEKGIYPAVDPLDSFSRMLDPLVVGEEHYAVACQVQTILQRYKALQDIIAILGMDELSEEDKLLVGRARRIERFLSQPFHVAEAFTGSPGKLVSLEDTIKGFKGLCAGDYDDLPEAAFYMVGSIDEAIEKGKRLMAEASS.

The segment at 1–61 (MAKAATSKKE…SSPQKGGKKG (61 aa)) is disordered. The span at 7–18 (SKKEASKVEAKK) shows a compositional bias: basic and acidic residues. Positions 44 to 55 (NSPSRTGSSSPQ) are enriched in polar residues. 209 to 216 (GGAGVGKT) contributes to the ATP binding site.

Belongs to the ATPase alpha/beta chains family. In terms of assembly, F-type ATPases have 2 components, CF(1) - the catalytic core - and CF(0) - the membrane proton channel. CF(1) has five subunits: alpha(3), beta(3), gamma(1), delta(1), epsilon(1). CF(0) has three main subunits: a(1), b(2) and c(9-12). The alpha and beta chains form an alternating ring which encloses part of the gamma chain. CF(1) is attached to CF(0) by a central stalk formed by the gamma and epsilon chains, while a peripheral stalk is formed by the delta and b chains.

It is found in the cell inner membrane. The catalysed reaction is ATP + H2O + 4 H(+)(in) = ADP + phosphate + 5 H(+)(out). In terms of biological role, produces ATP from ADP in the presence of a proton gradient across the membrane. The catalytic sites are hosted primarily by the beta subunits. The polypeptide is ATP synthase subunit beta (Bartonella bacilliformis (strain ATCC 35685 / KC583 / Herrer 020/F12,63)).